Reading from the N-terminus, the 282-residue chain is tRNA pseudouridine synthase A (282 aa).

Residue Asp53 is the Nucleophile of the active site. Residue Tyr119 coordinates substrate.

Belongs to the tRNA pseudouridine synthase TruA family. In terms of assembly, homodimer.

The catalysed reaction is uridine(38/39/40) in tRNA = pseudouridine(38/39/40) in tRNA. In terms of biological role, formation of pseudouridine at positions 38, 39 and 40 in the anticodon stem and loop of transfer RNAs. The polypeptide is tRNA pseudouridine synthase A (Corynebacterium efficiens (strain DSM 44549 / YS-314 / AJ 12310 / JCM 11189 / NBRC 100395)).